Reading from the N-terminus, the 894-residue chain is Bifunctional glutamine synthetase adenylyltransferase/adenylyl-removing enzyme (894 aa).

The adenylyl removase stretch occupies residues 1–410 (MPANTSAAIA…HFEQVFILPS (410 aa)). Residues 415 to 894 (SHPLSELWLD…QVFEQALDFS (480 aa)) form an adenylyl transferase region.

Belongs to the GlnE family. Mg(2+) serves as cofactor.

It catalyses the reaction [glutamine synthetase]-O(4)-(5'-adenylyl)-L-tyrosine + phosphate = [glutamine synthetase]-L-tyrosine + ADP. It carries out the reaction [glutamine synthetase]-L-tyrosine + ATP = [glutamine synthetase]-O(4)-(5'-adenylyl)-L-tyrosine + diphosphate. Its function is as follows. Involved in the regulation of glutamine synthetase GlnA, a key enzyme in the process to assimilate ammonia. When cellular nitrogen levels are high, the C-terminal adenylyl transferase (AT) inactivates GlnA by covalent transfer of an adenylyl group from ATP to specific tyrosine residue of GlnA, thus reducing its activity. Conversely, when nitrogen levels are low, the N-terminal adenylyl removase (AR) activates GlnA by removing the adenylyl group by phosphorolysis, increasing its activity. The regulatory region of GlnE binds the signal transduction protein PII (GlnB) which indicates the nitrogen status of the cell. This Chromobacterium violaceum (strain ATCC 12472 / DSM 30191 / JCM 1249 / CCUG 213 / NBRC 12614 / NCIMB 9131 / NCTC 9757 / MK) protein is Bifunctional glutamine synthetase adenylyltransferase/adenylyl-removing enzyme.